Here is a 455-residue protein sequence, read N- to C-terminus: Ribulose bisphosphate carboxylase large chain (455 aa).

N6,N6,N6-trimethyllysine is present on lysine 5. Residues asparagine 114 and threonine 164 each coordinate substrate. The active-site Proton acceptor is the lysine 166. Residue lysine 168 coordinates substrate. Mg(2+) is bound by residues lysine 192, aspartate 194, and glutamate 195. Lysine 192 is modified (N6-carboxylysine). Histidine 285 functions as the Proton acceptor in the catalytic mechanism. Substrate is bound by residues arginine 286, histidine 318, and serine 370.

The protein belongs to the RuBisCO large chain family. Type I subfamily. In terms of assembly, heterohexadecamer of 8 large chains and 8 small chains; disulfide-linked. The disulfide link is formed within the large subunit homodimers. Requires Mg(2+) as cofactor. The disulfide bond which can form in the large chain dimeric partners within the hexadecamer appears to be associated with oxidative stress and protein turnover.

The protein localises to the plastid. It is found in the chloroplast. It carries out the reaction 2 (2R)-3-phosphoglycerate + 2 H(+) = D-ribulose 1,5-bisphosphate + CO2 + H2O. The catalysed reaction is D-ribulose 1,5-bisphosphate + O2 = 2-phosphoglycolate + (2R)-3-phosphoglycerate + 2 H(+). In terms of biological role, ruBisCO catalyzes two reactions: the carboxylation of D-ribulose 1,5-bisphosphate, the primary event in carbon dioxide fixation, as well as the oxidative fragmentation of the pentose substrate in the photorespiration process. Both reactions occur simultaneously and in competition at the same active site. The chain is Ribulose bisphosphate carboxylase large chain from Lupinus nanus (Sky lupine).